Reading from the N-terminus, the 270-residue chain is Type III pantothenate kinase (270 aa).

Residue 19–26 coordinates ATP; the sequence is DIGNTSTT. Substrate is bound by residues Tyr109 and 116 to 119; that span reads GADR. Asp118 functions as the Proton acceptor in the catalytic mechanism. Asp139 contributes to the K(+) binding site. An ATP-binding site is contributed by Thr142. Thr194 is a binding site for substrate.

The protein belongs to the type III pantothenate kinase family. As to quaternary structure, homodimer. NH4(+) is required as a cofactor. K(+) serves as cofactor.

It localises to the cytoplasm. It catalyses the reaction (R)-pantothenate + ATP = (R)-4'-phosphopantothenate + ADP + H(+). It functions in the pathway cofactor biosynthesis; coenzyme A biosynthesis; CoA from (R)-pantothenate: step 1/5. Functionally, catalyzes the phosphorylation of pantothenate (Pan), the first step in CoA biosynthesis. This Chlorobaculum tepidum (strain ATCC 49652 / DSM 12025 / NBRC 103806 / TLS) (Chlorobium tepidum) protein is Type III pantothenate kinase.